Here is a 265-residue protein sequence, read N- to C-terminus: Bidirectional sugar transporter SWEET7b (265 aa).

Topologically, residues 1–9 are extracellular; it reads MVSPDLIRN. Residues 10 to 30 traverse the membrane as a helical segment; sequence MVGIVGNIISFGLFLSPVPTF. One can recognise a MtN3/slv 1 domain in the interval 10–97; that stretch reads MVGIVGNIIS…TIFFLFSDKK (88 aa). Residues 31-45 lie on the Cytoplasmic side of the membrane; sequence YRIIKNKDVQDFKAD. The chain crosses the membrane as a helical span at residues 46–66; that stretch reads PYLATLLNCMLWVFYGLPIVH. The Extracellular segment spans residues 67 to 69; that stretch reads PNS. Residues 70–90 form a helical membrane-spanning segment; the sequence is ILVVTINGIGLVIEAVYLTIF. The Cytoplasmic segment spans residues 91-101; that stretch reads FLFSDKKNKKK. The helical transmembrane segment at 102–122 threads the bilayer; it reads MGVVLATEALFMAAVVLGVLL. Over 123-131 the chain is Extracellular; that stretch reads GAHTHQRRS. A helical transmembrane segment spans residues 132–152; it reads LIVGILCVIFGTIMYSSPLTI. Residues 133 to 215 enclose the MtN3/slv 2 domain; it reads IVGILCVIFG…QLILYAIYYR (83 aa). At 153-165 the chain is on the cytoplasmic side; it reads MSQVVKTKSVEYM. Residues 166-186 traverse the membrane as a helical segment; the sequence is PLLLSVVSFLNGLCWTSYALI. At 187–189 the chain is on the extracellular side; that stretch reads RLD. Residues 190–210 form a helical membrane-spanning segment; it reads IFITIPNGLGVLFALMQLILY. The Cytoplasmic segment spans residues 211 to 265; sequence AIYYRTIPKKQDKNLELPTVAPVAKDTSIVTPVSKDDDVDGGNASHVTINITIEL.

This sequence belongs to the SWEET sugar transporter family. Forms homooligomers and/or heterooligomers.

Its subcellular location is the cell membrane. Its function is as follows. Mediates both low-affinity uptake and efflux of sugar across the plasma membrane. The chain is Bidirectional sugar transporter SWEET7b (SWEET7B) from Oryza sativa subsp. japonica (Rice).